Here is a 461-residue protein sequence, read N- to C-terminus: Anthocyanidin 3-O-glucoside 5-O-glucosyltransferase (461 aa).

Positions methionine 1–glycine 15 are cleaved as a signal peptide. Residue histidine 16 is the Proton acceptor of the active site. Histidine 16 serves as a coordination point for an anthocyanidin. Glutamine 338, histidine 353, tryptophan 356, asparagine 357, serine 358, glutamate 361, aspartate 377, and glutamine 378 together coordinate UDP-alpha-D-glucose.

Belongs to the UDP-glycosyltransferase family.

The catalysed reaction is an anthocyanidin 3-O-beta-D-glucoside + UDP-alpha-D-glucose = an anthocyanidin 3,5-di-O-beta-D-glucoside + UDP + 2 H(+). The protein operates within pigment biosynthesis; anthocyanin biosynthesis. Functionally, catalyzes the glucosylation at the O-5 position of anthocyanidin 3-glucosides to form anthocyanidin 3,5-di-O-glucosides using UDP-glucose as sugar donor. Anthocyanidin 3,5-di-O-glucosides are molecules that are responsible for pigmentation. Also acts on anthocyanidin 3-O-(6-O-malonylglucoside). Much less active with hydroxycinnamoylglucose derivatives. No activity in the absence of the 3-O-glucoside group. The chain is Anthocyanidin 3-O-glucoside 5-O-glucosyltransferase (HGT8) from Verbena hybrida (Garden vervain).